A 464-amino-acid polypeptide reads, in one-letter code: Chromosomal replication initiator protein DnaA (464 aa).

Residues 1-74 are domain I, interacts with DnaA modulators; the sequence is MDAVGYEVFW…ERKFLELSGH (74 aa). Residues 74-117 form a domain II region; that stretch reads HPIKLLFAVKKGTPHGNTAPPKHVHTYLEKNSPAEVPSKKSFHP. Positions 118–341 are domain III, AAA+ region; it reads DLNRDYTFEN…GALTKIIAFI (224 aa). 4 residues coordinate ATP: Gly-162, Gly-164, Lys-165, and Thr-166. Positions 342 to 464 are domain IV, binds dsDNA; it reads EVSGSITIDI…LKSKVQDSIR (123 aa).

The protein belongs to the DnaA family. Oligomerizes as a right-handed, spiral filament on DNA at oriC.

The protein resides in the cytoplasm. In terms of biological role, plays an essential role in the initiation and regulation of chromosomal replication. ATP-DnaA binds to the origin of replication (oriC) to initiate formation of the DNA replication initiation complex once per cell cycle. Binds the DnaA box (a 9 base pair repeat at the origin) and separates the double-stranded (ds)DNA. Forms a right-handed helical filament on oriC DNA; dsDNA binds to the exterior of the filament while single-stranded (ss)DNA is stabiized in the filament's interior. The ATP-DnaA-oriC complex binds and stabilizes one strand of the AT-rich DNA unwinding element (DUE), permitting loading of DNA polymerase. After initiation quickly degrades to an ADP-DnaA complex that is not apt for DNA replication. Binds acidic phospholipids. The protein is Chromosomal replication initiator protein DnaA of Treponema pallidum (strain Nichols).